Here is a 120-residue protein sequence, read N- to C-terminus: Putative pterin-4-alpha-carbinolamine dehydratase (120 aa).

It belongs to the pterin-4-alpha-carbinolamine dehydratase family.

It catalyses the reaction (4aS,6R)-4a-hydroxy-L-erythro-5,6,7,8-tetrahydrobiopterin = (6R)-L-erythro-6,7-dihydrobiopterin + H2O. The polypeptide is Putative pterin-4-alpha-carbinolamine dehydratase (Saccharomyces cerevisiae (strain ATCC 204508 / S288c) (Baker's yeast)).